The following is a 232-amino-acid chain: U2 small nuclear ribonucleoprotein B'' (232 aa).

In terms of domain architecture, RRM 1 spans 10–89 (QTVYLRNLNE…KRMRVQYAKT (80 aa)). Residues 92–159 (DCLATEDGST…QEPPAPPNNI (68 aa)) are disordered. Positions 108-123 (KKQEEKAAEKKRRAEE) are enriched in basic and acidic residues. Polar residues predominate over residues 127–151 (SGPNAAAQSNGTGYQASRLGKTSQE). An RRM 2 domain is found at 158–232 (NILFIQNLPA…NPMAISYAKK (75 aa)).

This sequence belongs to the RRM U1 A/B'' family. In terms of assembly, component of the spliceosome where it is associated with snRNP U2.

The protein resides in the nucleus. It is found in the cajal body. It localises to the nucleoplasm. Its subcellular location is the cytoplasm. Functionally, involved in nuclear pre-mRNA splicing. This chain is U2 small nuclear ribonucleoprotein B'', found in Oryza sativa subsp. indica (Rice).